A 450-amino-acid polypeptide reads, in one-letter code: Cytochrome c1 (450 aa).

The signal sequence occupies residues 1-21; that stretch reads MTLRNASLTAVAALTVALAGG. Over residues 24 to 58 the composition is skewed to low complexity; it reads AQDASTAPGTTAPAGSSYHTNEAAPAAADTAPAAE. The tract at residues 24 to 210 is disordered; it reads AQDASTAPGT…AAAQEAGDSH (187 aa). Acidic residues-rich tracts occupy residues 59 to 77, 85 to 108, and 118 to 194; these read AADE…EVTE, PAEE…EPAA, and APAE…EDEA. The heme c site is built by Cys245, Cys248, and His249. The disordered stretch occupies residues 284–305; the sequence is PETEEDRPRVPTDHFPTVSGEG. Met373 serves as a coordination point for heme c. A helical membrane pass occupies residues 421 to 435; that stretch reads SVIFLIVLAALLYLT.

The main subunits of complex b-c1 are: cytochrome b, cytochrome c1 and the Rieske protein. Binds 1 heme c group covalently per subunit.

It localises to the cell membrane. Component of the ubiquinol-cytochrome c reductase complex (complex III or cytochrome b-c1 complex), which is a respiratory chain that generates an electrochemical potential coupled to ATP synthesis. c1 functions as an electron donor to cytochrome c. The polypeptide is Cytochrome c1 (petC) (Paracoccus denitrificans).